The following is a 461-amino-acid chain: 26S proteasome regulatory subunit 8 (461 aa).

185 to 192 serves as a coordination point for ATP; that stretch reads GPPGTGKT.

Belongs to the AAA ATPase family.

The protein localises to the cytoplasm. Its subcellular location is the nucleus. The 26S proteasome is involved in the ATP-dependent degradation of ubiquitinated proteins. The regulatory (or ATPase) complex confers ATP dependency and substrate specificity to the 26S complex. This chain is 26S proteasome regulatory subunit 8 (psmc5), found in Xenopus laevis (African clawed frog).